A 913-amino-acid chain; its full sequence is Polyribonucleotide nucleotidyltransferase (913 aa).

Positions 407–427 are disordered; sequence YMHNYEMPPYSTGETGRVGSP. 2 residues coordinate Mg(2+): Asp521 and Asp527. The region spanning 587-646 is the KH domain; the sequence is PRIITTSVPVEKIGEVIGPKGKMINQIQEDTGAEIAIEDDGTVFISSEGGEAAEKAKAII. Positions 658–730 constitute an S1 motif domain; it reads GETYNGKVVK…DRGKISLAIP (73 aa). Positions 727-913 are disordered; sequence LAIPGFEDQE…VRRDFDPFED (187 aa). 3 stretches are compositionally biased toward basic and acidic residues: residues 742–789, 797–865, and 872–898; these read SRGD…RRSD, DRPR…DRRG, and RGSD…ERTE.

It belongs to the polyribonucleotide nucleotidyltransferase family. Mg(2+) serves as cofactor.

It is found in the cytoplasm. It catalyses the reaction RNA(n+1) + phosphate = RNA(n) + a ribonucleoside 5'-diphosphate. Involved in mRNA degradation. Catalyzes the phosphorolysis of single-stranded polyribonucleotides processively in the 3'- to 5'-direction. The polypeptide is Polyribonucleotide nucleotidyltransferase (Bifidobacterium longum (strain DJO10A)).